The primary structure comprises 104 residues: Late embryogenis abundant protein 41 (104 aa).

Residues 1 to 31 constitute a mitochondrion transit peptide; the sequence is MAARSLSGAVKSLCSAASGSLSCSIVLRRSY.

It belongs to the LEA type 3 family.

Its subcellular location is the mitochondrion. This Arabidopsis thaliana (Mouse-ear cress) protein is Late embryogenis abundant protein 41.